Consider the following 203-residue polypeptide: MIRLFTFGIITMLVLVIARLAIQRAYKYITLNTNINTTESKTRLSIRLVSIIPYYLPLFEGLQNFGQYVLPDYPVGAIPLYKKILLPMLIFYMNHAILGLVTFFALYYVLVRNKSPITVHQLVRFNSMQSILLFLVGSLFGAIFRAFPIEFRISFIGLTVCNMMFWFILSTITYSIVKAIQGKYSNIPVISEAVRIQISGYNT.

Transmembrane regions (helical) follow at residues 2–22, 51–71, 84–104, 131–151, and 153–173; these read IRLF…RLAI, IIPY…YVLP, ILLP…VTFF, ILLF…PIEF, and ISFI…STIT.

It belongs to the Tic20 family.

It is found in the plastid. The protein resides in the chloroplast membrane. In Porphyra purpurea (Red seaweed), this protein is Tic20 family protein Ycf60 (ycf60).